Consider the following 717-residue polypeptide: Delta-like protein D (717 aa).

An N-terminal signal peptide occupies residues 1 to 19 (MGRLMIAVLLCVMISQGFC). Residues 20 to 547 (SGVFELKLQE…EEDDGGFPWT (528 aa)) lie on the Extracellular side of the membrane. Positions 175–219 (FVCDEHYYGEGCSVFCRPRDDTFGHFTCGERGEIICNSGWKGQYC) constitute a DSL domain. Disulfide bonds link cysteine 177/cysteine 186, cysteine 190/cysteine 202, cysteine 210/cysteine 219, cysteine 224/cysteine 235, cysteine 228/cysteine 241, cysteine 243/cysteine 252, cysteine 261/cysteine 266, cysteine 274/cysteine 283, cysteine 290/cysteine 302, cysteine 296/cysteine 312, cysteine 314/cysteine 323, cysteine 330/cysteine 341, cysteine 335/cysteine 350, cysteine 352/cysteine 361, cysteine 368/cysteine 379, cysteine 373/cysteine 389, cysteine 391/cysteine 400, cysteine 407/cysteine 418, cysteine 412/cysteine 427, cysteine 429/cysteine 438, cysteine 445/cysteine 456, cysteine 450/cysteine 465, cysteine 467/cysteine 476, cysteine 483/cysteine 494, cysteine 488/cysteine 503, and cysteine 505/cysteine 514. EGF-like domains are found at residues 220-253 (TEPI…KYCD), 257-284 (RYPG…LFCN), and 286-324 (DLNY…DSCE). One can recognise an EGF-like 4; calcium-binding domain in the interval 326-362 (EVNECSGSPCRNGGSCTDLENTYSCTCPPGFYGRNCE). 2 consecutive EGF-like domains span residues 364–401 (SAMT…FNCE) and 403–439 (KIDH…THCE). The EGF-like 7; calcium-binding domain occupies 441–477 (NIDECATYPCQNGGTCQDGLSDYTCTCPPGYTGKNCT). Asparagine 475 carries N-linked (GlcNAc...) asparagine glycosylation. In terms of domain architecture, EGF-like 8 spans 479–515 (AVNKCLHNPCHNGATCHEMDNRYVCACIPGYGGRNCQ). Residues 548-568 (AVCAGIILVLLVLIGGSVFVI) traverse the membrane as a helical segment. Over 569 to 717 (YIRLKLQQRS…KDECIIATEV (149 aa)) the chain is Cytoplasmic. The tract at residues 649 to 693 (EDLGKEDSERSEATKCEPLDSDSEEKHRNHLKSDSSERKRTESLC) is disordered.

As to quaternary structure, interacts with mib. Post-translationally, ubiquitinated by mib, leading to its endocytosis and subsequent degradation. As to expression, expressed in both mesodermal and neuroectodermal regions. In the developing nervous system, it is expressed in overlapping regions with deltaB (dlb) and deltaA (dla); in the neural plate, dld is expressed in patches of contiguous cells with dla, while dlb is confined to scattered cells within those patches that will differentiate as neurons. In somites, it marks the anterior part of each formed somite, while deltaC (dlc) marks the posterior part. In 24 hours embryos, expressed in the hindbrain in stripes adjacent to rhombomere boundaries, but not in the actual boundary cells.

Its subcellular location is the membrane. Functionally, acts as a ligand for Notch receptors and is involved in primary neurogenesis and somitogenesis. Can activate Notch receptors, thereby playing a key role in lateral inhibition, a process that prevents the immediate neighbors of each nascent neural cell from simultaneously embarking on neural differentiation. Required in somite segmentation to keep the oscillations of neighboring presomitic mesoderm cells synchronized. This chain is Delta-like protein D (dld), found in Danio rerio (Zebrafish).